Here is a 100-residue protein sequence, read N- to C-terminus: Putative septation protein SpoVG (100 aa).

It belongs to the SpoVG family.

Its function is as follows. Could be involved in septation. The sequence is that of Putative septation protein SpoVG from Staphylococcus aureus (strain MRSA252).